A 765-amino-acid chain; its full sequence is 5-methyltetrahydropteroyltriglutamate--homocysteine methyltransferase 1 (765 aa).

The 5-methyltetrahydropteroyltri-L-glutamate site is built by lysine 18 and asparagine 116. 437-439 provides a ligand contact to L-homocysteine; it reads IGS. Residues 437-439 and glutamate 490 contribute to the L-methionine site; that span reads IGS. 5-methyltetrahydropteroyltri-L-glutamate-binding positions include 521–522 and tryptophan 567; that span reads RC. L-homocysteine is bound at residue aspartate 605. Aspartate 605 provides a ligand contact to L-methionine. Zn(2+)-binding residues include histidine 647, cysteine 649, histidine 658, aspartate 662, and glutamate 671. Histidine 701 acts as the Proton donor in catalysis. Cysteine 733 contributes to the Zn(2+) binding site.

Belongs to the vitamin-B12 independent methionine synthase family. The cofactor is Zn(2+). Expressed in leaves, stems, flowers, siliques and seeds.

Its subcellular location is the cytoplasm. The protein resides in the cytosol. It carries out the reaction 5-methyltetrahydropteroyltri-L-glutamate + L-homocysteine = tetrahydropteroyltri-L-glutamate + L-methionine. The protein operates within amino-acid biosynthesis; L-methionine biosynthesis via de novo pathway; L-methionine from L-homocysteine (MetE route): step 1/1. Functionally, catalyzes the transfer of a methyl group from 5-methyltetrahydrofolate to homocysteine resulting in methionine formation. This is 5-methyltetrahydropteroyltriglutamate--homocysteine methyltransferase 1 (MS1) from Arabidopsis thaliana (Mouse-ear cress).